The following is a 203-amino-acid chain: Thymidylate kinase (203 aa).

14–21 (GGEGIGKS) serves as a coordination point for ATP.

Belongs to the thymidylate kinase family.

The catalysed reaction is dTMP + ATP = dTDP + ADP. Functionally, phosphorylation of dTMP to form dTDP in both de novo and salvage pathways of dTTP synthesis. This chain is Thymidylate kinase, found in Rickettsia rickettsii (strain Iowa).